Reading from the N-terminus, the 217-residue chain is Large ribosomal subunit protein bL25 (217 aa).

A disordered region spans residues 187-217; that stretch reads STPSGLEVEEETGEEESAEPEVIEKGKKEEE. The span at 193-207 shows a compositional bias: acidic residues; it reads EVEEETGEEESAEPE. Positions 208-217 are enriched in basic and acidic residues; that stretch reads VIEKGKKEEE.

The protein belongs to the bacterial ribosomal protein bL25 family. CTC subfamily. As to quaternary structure, part of the 50S ribosomal subunit; part of the 5S rRNA/L5/L18/L25 subcomplex. Contacts the 5S rRNA. Binds to the 5S rRNA independently of L5 and L18.

This is one of the proteins that binds to the 5S RNA in the ribosome where it forms part of the central protuberance. This chain is Large ribosomal subunit protein bL25, found in Thermosipho africanus (strain TCF52B).